A 175-amino-acid chain; its full sequence is uncharacterized protein (175 aa).

Residues 107–138 adopt a coiled-coil conformation; it reads KTEEEAEKTLQEIERKIFKKLWENLDKERKRE.

This is an uncharacterized protein from Aquifex aeolicus (strain VF5).